Reading from the N-terminus, the 209-residue chain is Rac-like GTP-binding protein ARAC7 (209 aa).

13 to 20 is a GTP binding site; sequence GDGAVGKT. Positions 35–43 match the Effector region motif; it reads YIPTVFDNF. Residues 60–64 and 118–121 contribute to the GTP site; these read DTAGQ and TKLD. Residues C196, C203, and C206 are each lipidated (S-palmitoyl cysteine).

The protein belongs to the small GTPase superfamily. Rho family. Post-translationally, although this sequence has a C-terminal -CXXX, it is palmitoylated at Cys-206, rather than prenylated.

Its subcellular location is the membrane. Acts as a negative regulator of abscisic acid (ABA) responses. This Arabidopsis thaliana (Mouse-ear cress) protein is Rac-like GTP-binding protein ARAC7 (ARAC7).